Here is a 301-residue protein sequence, read N- to C-terminus: General transcription and DNA repair factor IIH subunit TFB4 (301 aa).

The segment at Cys259–Cys276 adopts a C4-type zinc-finger fold.

Belongs to the TFB4 family. As to quaternary structure, component of the 7-subunit TFIIH core complex composed of XPB, XPD, TFB1/GTF2H1, GTF2H2/P44, TFB4/GTF2H3, TFB2/GTF2H4 and TFB5/GTF2H5, which is active in NER. The core complex associates with the 3-subunit CDK-activating kinase (CAK) module composed of CYCH1/cyclin H1, CDKD and MAT1/At4g30820 to form the 10-subunit holoenzyme (holo-TFIIH) active in transcription.

It localises to the nucleus. Its function is as follows. Component of the general transcription and DNA repair factor IIH (TFIIH) core complex, which is involved in general and transcription-coupled nucleotide excision repair (NER) of damaged DNA and, when complexed to CAK, in RNA transcription by RNA polymerase II. In NER, TFIIH acts by opening DNA around the lesion to allow the excision of the damaged oligonucleotide and its replacement by a new DNA fragment. In transcription, TFIIH has an essential role in transcription initiation. When the pre-initiation complex (PIC) has been established, TFIIH is required for promoter opening and promoter escape. Phosphorylation of the C-terminal tail (CTD) of the largest subunit of RNA polymerase II by the kinase module CAK controls the initiation of transcription. The sequence is that of General transcription and DNA repair factor IIH subunit TFB4 from Arabidopsis thaliana (Mouse-ear cress).